A 445-amino-acid polypeptide reads, in one-letter code: Phosphoglucosamine mutase (445 aa).

Catalysis depends on S102, which acts as the Phosphoserine intermediate. Mg(2+)-binding residues include S102, D241, D243, and D245. The residue at position 102 (S102) is a Phosphoserine.

This sequence belongs to the phosphohexose mutase family. It depends on Mg(2+) as a cofactor. Post-translationally, activated by phosphorylation.

The catalysed reaction is alpha-D-glucosamine 1-phosphate = D-glucosamine 6-phosphate. Its function is as follows. Catalyzes the conversion of glucosamine-6-phosphate to glucosamine-1-phosphate. In Serratia proteamaculans (strain 568), this protein is Phosphoglucosamine mutase.